The sequence spans 190 residues: Ribosome maturation factor RimM (190 aa).

A PRC barrel domain is found at 95–177 (EDDEFFYTDL…AGLIDSPDDL (83 aa)). Positions 170–190 (LIDSPDDLTGKPPKPPGKTKE) are disordered. Residues 181-190 (PPKPPGKTKE) are compositionally biased toward pro residues.

The protein belongs to the RimM family. Binds ribosomal protein uS19.

The protein localises to the cytoplasm. In terms of biological role, an accessory protein needed during the final step in the assembly of 30S ribosomal subunit, possibly for assembly of the head region. Essential for efficient processing of 16S rRNA. May be needed both before and after RbfA during the maturation of 16S rRNA. It has affinity for free ribosomal 30S subunits but not for 70S ribosomes. This is Ribosome maturation factor RimM from Rhizobium rhizogenes (strain K84 / ATCC BAA-868) (Agrobacterium radiobacter).